A 423-amino-acid chain; its full sequence is Sulfate adenylyltransferase (423 aa).

Sulfate is bound by residues Q207 and R209. ATP contacts are provided by residues 207-210 and 301-304; these read QLRN and GRDH. Active-site residues include R209 and N210. A305 is a sulfate binding site.

Belongs to the sulfate adenylyltransferase family.

It localises to the mitosome. The enzyme catalyses sulfate + ATP + H(+) = adenosine 5'-phosphosulfate + diphosphate. It participates in sulfur metabolism; hydrogen sulfide biosynthesis; sulfite from sulfate: step 1/3. Functionally, catalyzes the first intracellular reaction of sulfate assimilation, forming adenosine-5'-phosphosulfate (APS) from inorganic sulfate and ATP. This is Sulfate adenylyltransferase from Entamoeba histolytica (strain ATCC 30459 / HM-1:IMSS / ABRM).